Here is a 121-residue protein sequence, read N- to C-terminus: HLLQFNKMLKFETRKNAVPFYAFGCYCGWGGQRRPKDATDRCCFVHDCCYEKVTKCNTKWDFYRYSLKSGYITCGKGTWCKEQICECDRVAAECLRRSLSTYKNEYMFYPDSRCREPSETC.

7 cysteine pairs are disulfide-bonded: Cys-25-Cys-114, Cys-27-Cys-43, Cys-42-Cys-94, Cys-48-Cys-121, Cys-49-Cys-87, Cys-56-Cys-80, and Cys-74-Cys-85. Tyr-26, Gly-28, and Gly-30 together coordinate Ca(2+). His-46 is an active-site residue. Position 47 (Asp-47) interacts with Ca(2+). Residue Asp-88 is part of the active site.

The protein belongs to the phospholipase A2 family. Group II subfamily. D49 sub-subfamily. As to quaternary structure, when this protein is associated with crotapotin (F5 or F7), it forms the crotoxin protein. It depends on Ca(2+) as a cofactor. Expressed by the venom gland.

Its subcellular location is the secreted. The catalysed reaction is a 1,2-diacyl-sn-glycero-3-phosphocholine + H2O = a 1-acyl-sn-glycero-3-phosphocholine + a fatty acid + H(+). With respect to regulation, activated by heparin. Inhibited by its chaperone crotapotin. In terms of biological role, snake venom phospholipase A2 (PLA2) that has anticoagulant activity and inhibits bactericial growth of the Gram-negative bacteria Xanthomonas axonopodis pv. passiflorae (in monomeric form). PLA2 catalyzes the calcium-dependent hydrolysis of the 2-acyl groups in 3-sn-phosphoglycerides. The protein is Basic phospholipase A2 F17 of Crotalus durissus terrificus (South American rattlesnake).